The primary structure comprises 448 residues: Glutamate--tRNA ligase 1 (448 aa).

The short motif at 9 to 19 (PSPTGKLHIGN) is the 'HIGH' region element. The short motif at 240–244 (KISKR) is the 'KMSKS' region element. Lys243 is a binding site for ATP.

This sequence belongs to the class-I aminoacyl-tRNA synthetase family. Glutamate--tRNA ligase type 1 subfamily. Monomer.

It is found in the cytoplasm. It carries out the reaction tRNA(Glu) + L-glutamate + ATP = L-glutamyl-tRNA(Glu) + AMP + diphosphate. In terms of biological role, catalyzes the attachment of glutamate to tRNA(Glu) in a two-step reaction: glutamate is first activated by ATP to form Glu-AMP and then transferred to the acceptor end of tRNA(Glu). The chain is Glutamate--tRNA ligase 1 from Orientia tsutsugamushi (strain Ikeda) (Rickettsia tsutsugamushi).